Consider the following 178-residue polypeptide: Ribosomal RNA small subunit methyltransferase G (178 aa).

Residues Gly-54, Leu-59, 105-106 (LE), and Arg-120 contribute to the S-adenosyl-L-methionine site.

Belongs to the methyltransferase superfamily. RNA methyltransferase RsmG family.

It is found in the cytoplasm. The catalysed reaction is guanosine(527) in 16S rRNA + S-adenosyl-L-methionine = N(7)-methylguanosine(527) in 16S rRNA + S-adenosyl-L-homocysteine. In terms of biological role, specifically methylates the N7 position of guanine in position 527 of 16S rRNA. The chain is Ribosomal RNA small subunit methyltransferase G from Helicobacter pylori (strain J99 / ATCC 700824) (Campylobacter pylori J99).